Reading from the N-terminus, the 257-residue chain is Ribosome maturation factor RimP (257 aa).

The interval 182-257 (LRRGGPPAAD…SRLKDRDSLH (76 aa)) is disordered. Residues 191 to 205 (DEADEAEEAEDEEVA) show a composition bias toward acidic residues. Residues 224–236 (KASPAAKPQKQAR) are compositionally biased toward low complexity.

Belongs to the RimP family.

It is found in the cytoplasm. Required for maturation of 30S ribosomal subunits. This chain is Ribosome maturation factor RimP, found in Methylobacterium radiotolerans (strain ATCC 27329 / DSM 1819 / JCM 2831 / NBRC 15690 / NCIMB 10815 / 0-1).